The sequence spans 135 residues: Transmembrane protein 107 (135 aa).

Helical transmembrane passes span 7–27 (LVPA…TIFW), 55–75 (VALS…LSGV), 83–103 (ALLS…FVFH), and 110–130 (YWII…FLLL).

Its subcellular location is the membrane. In terms of biological role, may play a role in cilia formation and embryonic patterning. The protein is Transmembrane protein 107 (tmem107) of Danio rerio (Zebrafish).